We begin with the raw amino-acid sequence, 132 residues long: Small ribosomal subunit protein uS11c (132 aa).

The protein belongs to the universal ribosomal protein uS11 family. Part of the 30S ribosomal subunit.

The protein localises to the plastid. Its subcellular location is the chloroplast. The chain is Small ribosomal subunit protein uS11c from Gnetum parvifolium (Small-leaved jointfir).